The chain runs to 1066 residues: Glucose transport transcription regulator RGT1 (1066 aa).

2 stretches are compositionally biased toward polar residues: residues 1 to 11 (MTPMSENNGSE) and 42 to 57 (VESQ…NTSA). Disordered stretches follow at residues 1-70 (MTPM…ACDQ), 108-153 (PSKG…VLLP), 214-285 (YASP…QQQY), 298-399 (GANG…EYPL), 616-645 (DATK…NDSR), and 849-871 (MEHD…ESGK). The segment at residues 68–97 (CDQCRKRKIRCDYDDDKGVCTSCRKNGESC) is a DNA-binding region (zn(2)-C6 fungal-type). Composition is skewed to polar residues over residues 118–131 (VSRS…NTAA), 139–148 (EFSSPSSRQG), 260–270 (GSNPPSLKNVS), and 314–327 (MSPS…SVPM). Composition is skewed to low complexity over residues 328–350 (NQSN…KVQP) and 622–641 (SNDN…NNDN). A compositionally biased stretch (polar residues) spans 855–871 (GNSASRKFTTSQAESGK).

It belongs to the EDS1/RGT1 family.

It localises to the nucleus. Its subcellular location is the cytoplasm. In terms of biological role, glucose-responsive transcription factor that regulates expression of several glucose transporter (HXT) genes in response to glucose. In the absence of glucose, it functions as a transcriptional repressor, whereas high concentrations of glucose cause it to function as a transcriptional activator. In cells growing on low levels of glucose, has a neutral role, neither repressing nor activating transcription. This Zygosaccharomyces rouxii (strain ATCC 2623 / CBS 732 / NBRC 1130 / NCYC 568 / NRRL Y-229) protein is Glucose transport transcription regulator RGT1 (RGT1).